A 211-amino-acid chain; its full sequence is MFITFEGIDGCGKTTQAVLLAKYLSDLYGEHRVVLTREPGGTSLNELIRGALLGLTDYKLDGITELMLFIAMRRESFVKVVLPGLLAGKIVISDRFTDSTVAYQGYGCGVDLALVGMLNSLVADVVPDITFVIDASIELALARTSLNGFENHGPEFYDRVREGFRTIVANNPHRCHMIDCKSDAAEDVYSTHDRIVALFRAITKDKLKVAK.

7-14 is a binding site for ATP; it reads GIDGCGKT.

This sequence belongs to the thymidylate kinase family.

It carries out the reaction dTMP + ATP = dTDP + ADP. Phosphorylation of dTMP to form dTDP in both de novo and salvage pathways of dTTP synthesis. The chain is Thymidylate kinase from Anaplasma marginale (strain Florida).